The chain runs to 769 residues: Serine/threonine-protein kinase PLK4 (769 aa).

The Protein kinase domain maps to 14-267 (YEVQHLLGKG…LEAVLCHPFM (254 aa)). Residues 20–28 (LGKGGFATV) and Lys-43 contribute to the ATP site. The active-site Proton acceptor is Asp-138. A Cryptic POLO box 1 (CPB1) domain is found at 381–498 (EDRISVPPLN…ARFVGLVKSK (118 aa)). One can recognise a Cryptic POLO box 2 (CPB2) domain in the interval 499-602 (TPKVTYFSTL…GRRPITDVQP (104 aa)). Positions 660 to 739 (PIKRINVPEI…IPNIQLKLKT (80 aa)) constitute a POLO box domain.

The protein belongs to the protein kinase superfamily. Ser/Thr protein kinase family. CDC5/Polo subfamily. Homodimer. Interacts with Alms1a. Ubiquitinated by the SCF-slmb ubiquitin ligase complex; leading to its degradation by the proteasome during interphase and regulating centriole number and ensuring the block to centriole reduplication. In terms of tissue distribution, expressed in testis (at protein level).

It localises to the cytoplasm. Its subcellular location is the cytoskeleton. It is found in the microtubule organizing center. The protein localises to the centrosome. The protein resides in the centriole. The enzyme catalyses L-seryl-[protein] + ATP = O-phospho-L-seryl-[protein] + ADP + H(+). The catalysed reaction is L-threonyl-[protein] + ATP = O-phospho-L-threonyl-[protein] + ADP + H(+). Serine/threonine-protein kinase that plays a central role in centriole duplication. Able to trigger procentriole formation on the surface of the mother centriole cylinder, using mother centriole as a platform, leading to the recruitment of centriole biogenesis proteins such as Sas-6. When overexpressed, it is able to induce centrosome amplification through the simultaneous generation of multiple procentrioles adjoining each parental centriole during S phase. Centrosome amplification following overexpression can initiate tumorigenesis, highlighting the importance of centrosome regulation in cancers. The protein is Serine/threonine-protein kinase PLK4 (SAK) of Drosophila melanogaster (Fruit fly).